Here is a 170-residue protein sequence, read N- to C-terminus: Lipoprotein signal peptidase (170 aa).

Transmembrane regions (helical) follow at residues 9–29 (FNIFVFVISLIFFDQLSKYLV), 72–92 (IFFIAMPIFILIFVFSLALKE), and 95–117 (CITRISLLLIFSGGVGNIIDRLF). Active-site residues include D124 and D146. A helical transmembrane segment spans residues 143–163 (NFADSYVVIGMILFLVYDFFI).

This sequence belongs to the peptidase A8 family.

It localises to the cell inner membrane. It carries out the reaction Release of signal peptides from bacterial membrane prolipoproteins. Hydrolyzes -Xaa-Yaa-Zaa-|-(S,diacylglyceryl)Cys-, in which Xaa is hydrophobic (preferably Leu), and Yaa (Ala or Ser) and Zaa (Gly or Ala) have small, neutral side chains.. It participates in protein modification; lipoprotein biosynthesis (signal peptide cleavage). In terms of biological role, this protein specifically catalyzes the removal of signal peptides from prolipoproteins. This is Lipoprotein signal peptidase from Borrelia garinii subsp. bavariensis (strain ATCC BAA-2496 / DSM 23469 / PBi) (Borreliella bavariensis).